The sequence spans 259 residues: Small ribosomal subunit protein uS2 (259 aa).

It belongs to the universal ribosomal protein uS2 family.

The protein is Small ribosomal subunit protein uS2 of Streptococcus pneumoniae serotype 4 (strain ATCC BAA-334 / TIGR4).